A 117-amino-acid chain; its full sequence is Huntingtin-interacting protein M (117 aa).

Disordered stretches follow at residues 1–30 (MSEKKNCKNSSTNNNQTQDPSRNELQVPRS) and 71–117 (EASN…RKND). A compositionally biased stretch (polar residues) spans 72 to 81 (ASNNGSMRNT). Over residues 82–117 (SQDREREVDNNREPHSAESDVTRFLFDEMPKSRKND) the composition is skewed to basic and acidic residues.

As to quaternary structure, may interact with the N-terminus of HD.

The polypeptide is Huntingtin-interacting protein M (Homo sapiens (Human)).